A 215-amino-acid polypeptide reads, in one-letter code: Glycerol-3-phosphate acyltransferase (215 aa).

A run of 6 helical transmembrane segments spans residues 3 to 23, 42 to 61, 68 to 90, 110 to 130, 134 to 154, and 162 to 182; these read LILLILTAYLLGSIPTGLWIG, TNTFRILGLKAGAATLLIDI, TLLPVLVGASNVSPIAIGFFAVL, AGVLLGFAPLYLLFLAAVFVL, LFSMISLASLTASVVAVISVL, and LLPGYDWLLTITIVVLAAIII.

The protein belongs to the PlsY family. As to quaternary structure, probably interacts with PlsX.

The protein localises to the cell membrane. It carries out the reaction an acyl phosphate + sn-glycerol 3-phosphate = a 1-acyl-sn-glycero-3-phosphate + phosphate. Its pathway is lipid metabolism; phospholipid metabolism. In terms of biological role, catalyzes the transfer of an acyl group from acyl-phosphate (acyl-PO(4)) to glycerol-3-phosphate (G3P) to form lysophosphatidic acid (LPA). This enzyme utilizes acyl-phosphate as fatty acyl donor, but not acyl-CoA or acyl-ACP. This chain is Glycerol-3-phosphate acyltransferase, found in Streptococcus equi subsp. zooepidemicus (strain H70).